Reading from the N-terminus, the 316-residue chain is uncharacterized protein (316 aa).

2 disordered regions span residues 82-105 (AMAAASTGAGSSSGTNVGGSSGGN) and 238-257 (ASVSVQTTQQSRQQSTDTQE). Composition is skewed to low complexity over residues 84 to 96 (AAASTGAGSSSGT) and 239 to 255 (SVSVQTTQQSRQQSTDT).

The protein belongs to the MG307/MG309/MG338 family.

This is an uncharacterized protein from Mycoplasma pneumoniae (strain ATCC 29342 / M129 / Subtype 1) (Mycoplasmoides pneumoniae).